The chain runs to 695 residues: Eukaryotic translation initiation factor 3 subunit B (695 aa).

Positions 1 to 10 (MAKKKGDEKA) are enriched in basic and acidic residues. The disordered stretch occupies residues 1–43 (MAKKKGDEKANPAPQSDNEEQNFEEEPDFDDPEDFVEIPEEEL). Residues 17-43 (DNEEQNFEEEPDFDDPEDFVEIPEEEL) show a composition bias toward acidic residues. In terms of domain architecture, RRM spans 60–144 (NVVVVDGCPQ…HTFLVNLFTD (85 aa)). 4 WD repeats span residues 164–205 (KVQS…PLLL), 295–335 (PPDE…LLDK), 338–373 (IKIP…TLLE), and 444–486 (EIKE…APTL).

It belongs to the eIF-3 subunit B family. As to quaternary structure, component of the eukaryotic translation initiation factor 3 (eIF-3) complex.

It localises to the cytoplasm. In terms of biological role, RNA-binding component of the eukaryotic translation initiation factor 3 (eIF-3) complex, which is involved in protein synthesis of a specialized repertoire of mRNAs and, together with other initiation factors, stimulates binding of mRNA and methionyl-tRNAi to the 40S ribosome. The eIF-3 complex specifically targets and initiates translation of a subset of mRNAs involved in cell proliferation. This chain is Eukaryotic translation initiation factor 3 subunit B, found in Bombyx mori (Silk moth).